Consider the following 510-residue polypeptide: MSHLVLTPGSLTLKQIREISRGKVTLELADSAIADINTSAGLVQQVLDEGRTVYGINTGFGLLANTKIAADDLQLLQRSIVLSHAAGTGQYMQDATVRLMMVLKINSLSRGFSGIRLEVINFLIALVNAEVYPCVPEKGSVGASGDLAPLSHMCLPLLAEGEMSYKGQLITAAEGLEIAGLKPLELAAKEGLALLNGTQASTALALEGLFNAEDLFAASSVIGAMSVEAAMGSRSPFDSRIHAARGQKGQIDSAAVFRHLLGDESEISLDHVNCEKVQDPYSLRCQPQVLGACLTQIRHAAEVLGTEANGVTDNPLVFQDTGDIISGGNFHAEPVAMAADNLAIAIAELGSIAERRIALLIDSNLSKLPPFLVENGGVNSGFMIAQVTAAALASENKTYAHPASVDSLPTSANQEDHVSMATFAARRLRDMSENTRGVLAVELLAAAQGLDFRRPLQPAVAVAKAKAELRELVTYYDKDRFFGPDIEAATDLLITASYNAYLPADILPSW.

The segment at residues 143 to 145 is a cross-link (5-imidazolinone (Ala-Gly)); the sequence is ASG. Serine 144 carries the post-translational modification 2,3-didehydroalanine (Ser).

This sequence belongs to the PAL/histidase family. In terms of processing, contains an active site 4-methylidene-imidazol-5-one (MIO), which is formed autocatalytically by cyclization and dehydration of residues Ala-Ser-Gly.

The protein resides in the cytoplasm. The catalysed reaction is L-histidine = trans-urocanate + NH4(+). The protein operates within amino-acid degradation; L-histidine degradation into L-glutamate; N-formimidoyl-L-glutamate from L-histidine: step 1/3. The protein is Histidine ammonia-lyase of Shewanella piezotolerans (strain WP3 / JCM 13877).